Here is a 319-residue protein sequence, read N- to C-terminus: tRNA dimethylallyltransferase (319 aa).

ATP is bound at residue 26-33 (GPTAAGKS). 28 to 33 (TAAGKS) serves as a coordination point for substrate. Positions 51-54 (DSMQ) are interaction with substrate tRNA.

This sequence belongs to the IPP transferase family. As to quaternary structure, monomer. Mg(2+) serves as cofactor.

It catalyses the reaction adenosine(37) in tRNA + dimethylallyl diphosphate = N(6)-dimethylallyladenosine(37) in tRNA + diphosphate. In terms of biological role, catalyzes the transfer of a dimethylallyl group onto the adenine at position 37 in tRNAs that read codons beginning with uridine, leading to the formation of N6-(dimethylallyl)adenosine (i(6)A). This is tRNA dimethylallyltransferase from Salinispora tropica (strain ATCC BAA-916 / DSM 44818 / JCM 13857 / NBRC 105044 / CNB-440).